Reading from the N-terminus, the 1585-residue chain is MAKLTATFELHDKISRKLRMIQGNAERLKRAANGPLIFEAEDRTERVMRQIDRSANRLTARARLLEMGLDDRVSNGLHSIRQQAEDLTEGSHEVTVSVNDQATPRFRLIRGGLTDLNSSHAEPTVSVRDHASNQLDEIRRHVTDVDSEHAEPTVSIKDRASAALDAIEAKIDSLKGATITLAVAGGFSAGSIMGSGKSTMSQDAYVSATSNVNKKDVAKMTDQIYFNNKAGSSREEVSLSLRNLSQQTGASKKALAELTESSSKIAQLMNADQAEVDRAFSSMYNNLKLSGKQSGDLIAYVYRNAGDQADDLLDTMNEYSSTFKDLKLTGGQIANAMIKGTKGGARNFDNLADSMREFNIRRTEMSDSQVDAFKTLFGAKETKKMFKGFKDGSISGEESLFRVAKALSKVKDKTKRAAIATELIGTQYEDLKQPILDMAEGIGTSAKTSGELERSFTKLRDNNPMTPVNDAMRDFESISKDMGTSLLTGLGPAFDKISSFINSKEGQEKLKEIKKDIADLGEEIGDKLNVAIEWSVNHWDDLKTAIKVVIPSLIGLIGYLKILRPLLKGIGTVGSDAAGVIRKLIPKRTPKAGTNTQSERRNRNSNRNASTRGRESKTATGPTSLPRSGSLTYCCCSDGGKNDRIRRRRGKRVLGRRGNPNRMNPSDSSIAVSSERLERRRSGRTVGTNPTRDSRSAIITTRSELYSAGRAAGGTSKFGKVLSPLKSVGKFAKGVPLLGTALAATDLIGMNKDNVGEKIGSAGGGLAGAATGAAIGSVIPGVGTAIGGLVGGIAGTMGGSSLGKAFDGSEVKKKLNSTLFDQKWWSEKWSGIKSNAKTSINGLSDTWSNVKEKVKSTLFNSEWWSEKWSGVKSWAQNKWNSASSVWESVKGKIKSTLFSEKWWSGKWEGVKSWAQSKWDSASSVWQSVKGKLKSTLFSEKWWSGKWESVKSWSKNKWDNAKSIWKSVKSSISETLFSKKWWSEKWQSVKELGSSILGGVKEVGGKVASSAKKTAGKAWGYVKSGVNYLFGSGKEKPKKHATGGYITKPTISWIGEAGKEFVIPVENNKGRGKMLLSQAASKLGMSVVDDIASASSAGGEPATSPLVRSAAVTASVSPIIDTSSLDEQATSFGQQFTKSFDQGIRDNVVSMEAWKQKNVGQPMNNLISYSPNYGKQVVNGYAKGQNSTSTGTDGFLQTKVKMPFQNTVNKSSSWGSGTIKGFASGQNSSQTGTDQYVSTHINKPFIRSKESSNGWGSGMIGNFVSGMTSKASEVNEAAKELAKKVEKAFREELDIHSPSRVMMSLGRFASIGIVKGLDSVDVKKFAEKQAGSLAAAYSGMGAVSGNVKQWLMAAIMATKTPMSWLPGLMTIAQHESGGNPKAINLWDSNAKAGHPSQGLMQTIPSTFNAHKLPGMNNILNPIHNAAAAIGYIKSRYGSINNVPGIRSMRHGGPYVGYANGGLITKEQIARVGEGNKREWIIPEERGIRGRYLLAQAAKALGMEVTDPSEKGQTELSSGQVTAATTGRNQTTFKAAGGKEVIIQFNGDQHFHNDQDMNSLVAKIKQALVDELEQDINIGTKGVVAFD.

Residues 12–59 adopt a coiled-coil conformation; the sequence is DKISRKLRMIQGNAERLKRAANGPLIFEAEDRTERVMRQIDRSANRLT. Disordered stretches follow at residues 586–627 and 645–692; these read PKRT…SLPR and IRRR…NPTR. Over residues 618 to 627 the composition is skewed to polar residues; that stretch reads TATGPTSLPR. Basic residues predominate over residues 645-655; the sequence is IRRRRGKRVLG. Positions 661–672 are enriched in polar residues; sequence NRMNPSDSSIAV. Residues serine 970 and serine 972 each carry the phosphoserine modification.

It to B.subtilis XkdO.

This is an uncharacterized protein from Bacillus subtilis (strain 168).